Consider the following 124-residue polypeptide: Large ribosomal subunit protein uL18 (124 aa).

This sequence belongs to the universal ribosomal protein uL18 family. In terms of assembly, part of the 50S ribosomal subunit; part of the 5S rRNA/L5/L18/L25 subcomplex. Contacts the 5S and 23S rRNAs.

In terms of biological role, this is one of the proteins that bind and probably mediate the attachment of the 5S RNA into the large ribosomal subunit, where it forms part of the central protuberance. The sequence is that of Large ribosomal subunit protein uL18 from Frankia casuarinae (strain DSM 45818 / CECT 9043 / HFP020203 / CcI3).